The primary structure comprises 175 residues: MGIKSIIIDQKQVEAGCNAALKWCNEHFAGKQVIVLGILKGCIPFLGKLISQFTFDLQLDFVAVASYHGGSRQQEAPKIVLDMSHDPKGKDILLIEDIVDSGRSIKLVLDLLHTRKAKSVILVSFIEKLKPREADIKVDYSCFKNQDEFLVGFGLDYQGFYRNLPYVGVFDPEDN.

The diphosphate site is built by lysine 40 and glycine 41. 2 residues coordinate Mg(2+): glutamate 96 and aspartate 97. The active-site Proton acceptor is the aspartate 100. GMP-binding positions include lysine 128, 149-150, and aspartate 156; that span reads FL. A diphosphate-binding site is contributed by arginine 162.

The protein belongs to the purine/pyrimidine phosphoribosyltransferase family. It depends on Mg(2+) as a cofactor.

The protein resides in the cytoplasm. It catalyses the reaction IMP + diphosphate = hypoxanthine + 5-phospho-alpha-D-ribose 1-diphosphate. The catalysed reaction is GMP + diphosphate = guanine + 5-phospho-alpha-D-ribose 1-diphosphate. It participates in purine metabolism; IMP biosynthesis via salvage pathway; IMP from hypoxanthine: step 1/1. Its pathway is purine metabolism; GMP biosynthesis via salvage pathway; GMP from guanine: step 1/1. Its function is as follows. Purine salvage pathway enzyme that catalyzes the transfer of the ribosyl-5-phosphate group from 5-phospho-alpha-D-ribose 1-diphosphate (PRPP) to the N9 position of the 6-oxopurines hypoxanthine and guanine to form the corresponding ribonucleotides IMP (inosine 5'-monophosphate) and GMP (guanosine 5'-monophosphate), with the release of PPi. In Mycoplasma pneumoniae (strain ATCC 29342 / M129 / Subtype 1) (Mycoplasmoides pneumoniae), this protein is Hypoxanthine-guanine phosphoribosyltransferase (hpt).